We begin with the raw amino-acid sequence, 290 residues long: 4-hydroxybenzoate octaprenyltransferase (290 aa).

The next 6 membrane-spanning stretches (helical) occupy residues 41-61, 89-109, 133-153, 158-178, 202-224, and 269-289; these read WPLLAIFVLGTLLMRSAGCAM, WEAVAIAVVLAFISFLLIQPL, FFAIPQAYLGIAFGFGIPMAF, DTVPMLAWVMLIANIFWSVAY, FGRFDVAAVMLCYAATLGIYVWI, and WLGGVLFAGIAAHYLLAGTAG.

The protein belongs to the UbiA prenyltransferase family. Mg(2+) is required as a cofactor.

The protein resides in the cell inner membrane. It carries out the reaction all-trans-octaprenyl diphosphate + 4-hydroxybenzoate = 4-hydroxy-3-(all-trans-octaprenyl)benzoate + diphosphate. Its pathway is cofactor biosynthesis; ubiquinone biosynthesis. Functionally, catalyzes the prenylation of para-hydroxybenzoate (PHB) with an all-trans polyprenyl group. Mediates the second step in the final reaction sequence of ubiquinone-8 (UQ-8) biosynthesis, which is the condensation of the polyisoprenoid side chain with PHB, generating the first membrane-bound Q intermediate 3-octaprenyl-4-hydroxybenzoate. The sequence is that of 4-hydroxybenzoate octaprenyltransferase from Burkholderia ambifaria (strain ATCC BAA-244 / DSM 16087 / CCUG 44356 / LMG 19182 / AMMD) (Burkholderia cepacia (strain AMMD)).